A 413-amino-acid chain; its full sequence is MKERIILAYSGGLDTSVAIGWIAEATGAEVVAVAVDVGQGGESLETIRQRALDCGAVEAYVADARDEFAEQYCMPTLKANALYMDAYPLVSAISRPVISRHLVAAARQFGASTVAHGCTGKGNDQVRFEVSIQTLGPDLKCIAPVRDLALTREKAIEYAERNDLPIVTTKKNPFSIDQNVWGRAVETGFLEDIWNGPTKDVYDYTDDPAFPPAPDVVTIAFERGVPTALDGRALSPLEIIEELNRRAGAQGVGRIDIVEDRLVGIKSREIYEAPGAMALIAAHRELENVTLEREQARFKKHVDQRWTELVYDGQWYSPLKRNLDTFIDATQEHVNGEIRLELHGGRATVQGRRSETGLYDFNLATYDEGDSFDQSSARGFIDIFGLSAKTASEREQRLRGSADLQDVARLSND.

8–16 (AYSGGLDTS) lines the ATP pocket. Residue Tyr-87 participates in L-citrulline binding. Gly-117 is a binding site for ATP. The L-aspartate site is built by Thr-119, Asn-123, and Asp-124. Residue Asn-123 participates in L-citrulline binding. L-citrulline is bound by residues Arg-127, Ser-175, Glu-259, and Tyr-271.

It belongs to the argininosuccinate synthase family. Type 1 subfamily. As to quaternary structure, homotetramer.

It is found in the cytoplasm. The enzyme catalyses L-citrulline + L-aspartate + ATP = 2-(N(omega)-L-arginino)succinate + AMP + diphosphate + H(+). The protein operates within amino-acid biosynthesis; L-arginine biosynthesis; L-arginine from L-ornithine and carbamoyl phosphate: step 2/3. The protein is Argininosuccinate synthase of Micrococcus luteus (strain ATCC 4698 / DSM 20030 / JCM 1464 / CCM 169 / CCUG 5858 / IAM 1056 / NBRC 3333 / NCIMB 9278 / NCTC 2665 / VKM Ac-2230) (Micrococcus lysodeikticus).